The following is a 444-amino-acid chain: Deoxyguanosinetriphosphate triphosphohydrolase-like protein (444 aa).

Residues 66–259 (RLTHSLEAAQ…MELADDIAYG (194 aa)) form the HD domain.

The protein belongs to the dGTPase family. Type 2 subfamily.

In Vibrio campbellii (strain ATCC BAA-1116), this protein is Deoxyguanosinetriphosphate triphosphohydrolase-like protein.